The following is a 153-amino-acid chain: Small ribosomal subunit protein uS5 (153 aa).

The S5 DRBM domain maps to 15–78 (FQEVVVNVGR…DDAFKNLIHV (64 aa)).

The protein belongs to the universal ribosomal protein uS5 family. Part of the 30S ribosomal subunit. Contacts proteins S4 and S8.

Functionally, with S4 and S12 plays an important role in translational accuracy. Located at the back of the 30S subunit body where it stabilizes the conformation of the head with respect to the body. This chain is Small ribosomal subunit protein uS5, found in Helicobacter acinonychis (strain Sheeba).